The following is a 197-amino-acid chain: Phosphoheptose isomerase (197 aa).

Positions 34 to 196 (MVQCLLGGNK…DRTLFPQDEQ (163 aa)) constitute an SIS domain. Position 49–51 (49–51 (NGG)) interacts with substrate. Zn(2+) contacts are provided by His58 and Glu62. Substrate contacts are provided by residues Glu62, 91-92 (ND), 117-119 (STS), Ser122, and Gln172. Residues Gln172 and His180 each coordinate Zn(2+).

Belongs to the SIS family. GmhA subfamily. As to quaternary structure, homotetramer. Zn(2+) serves as cofactor.

The protein resides in the cytoplasm. The catalysed reaction is 2 D-sedoheptulose 7-phosphate = D-glycero-alpha-D-manno-heptose 7-phosphate + D-glycero-beta-D-manno-heptose 7-phosphate. It functions in the pathway carbohydrate biosynthesis; D-glycero-D-manno-heptose 7-phosphate biosynthesis; D-glycero-alpha-D-manno-heptose 7-phosphate and D-glycero-beta-D-manno-heptose 7-phosphate from sedoheptulose 7-phosphate: step 1/1. Its function is as follows. Catalyzes the isomerization of sedoheptulose 7-phosphate in D-glycero-D-manno-heptose 7-phosphate. The polypeptide is Phosphoheptose isomerase (Shewanella piezotolerans (strain WP3 / JCM 13877)).